The following is a 476-amino-acid chain: Argininosuccinate lyase (476 aa).

The protein belongs to the lyase 1 family. Argininosuccinate lyase subfamily.

It localises to the cytoplasm. The catalysed reaction is 2-(N(omega)-L-arginino)succinate = fumarate + L-arginine. It participates in amino-acid biosynthesis; L-arginine biosynthesis; L-arginine from L-ornithine and carbamoyl phosphate: step 3/3. The protein is Argininosuccinate lyase of Leptothrix cholodnii (strain ATCC 51168 / LMG 8142 / SP-6) (Leptothrix discophora (strain SP-6)).